Reading from the N-terminus, the 205-residue chain is Ribosomal RNA small subunit methyltransferase G (205 aa).

Residues Gly76, Leu81, 127 to 128 (IE), and Arg140 each bind S-adenosyl-L-methionine.

This sequence belongs to the methyltransferase superfamily. RNA methyltransferase RsmG family.

It is found in the cytoplasm. It carries out the reaction guanosine(527) in 16S rRNA + S-adenosyl-L-methionine = N(7)-methylguanosine(527) in 16S rRNA + S-adenosyl-L-homocysteine. Specifically methylates the N7 position of guanine in position 527 of 16S rRNA. The sequence is that of Ribosomal RNA small subunit methyltransferase G from Francisella tularensis subsp. tularensis (strain FSC 198).